The following is a 106-amino-acid chain: Nucleoid-associated protein Exig_0019 (106 aa).

Positions 1 to 16 are enriched in low complexity; sequence MRGMGNMNNMMKQMQK. Residues 1-23 form a disordered region; the sequence is MRGMGNMNNMMKQMQKMQKDMAK.

This sequence belongs to the YbaB/EbfC family. In terms of assembly, homodimer.

The protein resides in the cytoplasm. The protein localises to the nucleoid. In terms of biological role, binds to DNA and alters its conformation. May be involved in regulation of gene expression, nucleoid organization and DNA protection. The polypeptide is Nucleoid-associated protein Exig_0019 (Exiguobacterium sibiricum (strain DSM 17290 / CCUG 55495 / CIP 109462 / JCM 13490 / 255-15)).